A 121-amino-acid chain; its full sequence is MARISSTQPRKQRKFRYNAPIHTRGAFLHSPLASDLREKYGKRSFRVVTGDTVKVLRGEFKGIEGVVDGVDVKNTKVLVHGVYVKKANGEDVPRPLDPSKIMITKLNTKDAVRVARLEVKA.

It belongs to the universal ribosomal protein uL24 family. In terms of assembly, part of the 50S ribosomal subunit.

Functionally, one of two assembly initiator proteins, it binds directly to the 5'-end of the 23S rRNA, where it nucleates assembly of the 50S subunit. Its function is as follows. Located at the polypeptide exit tunnel on the outside of the subunit. This is Large ribosomal subunit protein uL24 from Methanocorpusculum labreanum (strain ATCC 43576 / DSM 4855 / Z).